A 724-amino-acid polypeptide reads, in one-letter code: MDGNNSNSQGKCPVMHGGNTASEGDVMAWWPRALNLEILHQKDTKPNPMGDGPSYHEALKSLDFDALKTDMHALLTDSQDWWPADYGHYGGLMIRLAWHSAGSYRLADGRGGGGSGNIRFAPLNSWPDNGNLDKARRLLWPLKKKYGNKISWADLILLAGTIAYENMGLKTFGFGFGREDIWGPEIDTYWGAEKEWLAPSDTRYEDVAKPDTMENPLAAVQMGLIYVNPEGVNGKPDPLKTAAQVRTTFARMAMNDEETAALTAGGHTVGKTHGNGDAGALGPEPEGAELENQGFGWVNPNLGGKASNAVTSGLEGAWTTNPTQFDMGYFELLFGYEWELKKSPAGAQQWQPINIKPEHMPVDASDPSQRRMPIMTDADMAMKMDPAYRAICEKFMADPAYFKDTFARAWFKLTHRDMGPKDCYFGPDVPSEELVWQDPVPAGPTGYDVARVKSAIAASGLSIAEMVATAWDSARTFRGSDKRGGANGARIRLAPQKDWDGNEPDRLAKVLGVLEPIARDAGASLADVIVLAGNVGIEQAARAAGHDVAVPFSPGRGDATDAMTDAESFDVLEPLADGYRNWQKADYVVSAEEMLLDRTQLLGLTAPEMTVLVGGMRVLGTNYGGTKHGVFTDREGALTTDFFVNLTDMAYSWVPVDRRTYEIRDRKTGKARWTATRADLVFGSNSILRAYAEVYAQDDNAGKFVADFVAAWTKVMNADRFDLA.

A cross-link (tryptophyl-tyrosyl-methioninium (Trp-Tyr) (with M-252)) is located at residues 98 to 226 (WHSAGSYRLA…LAAVQMGLIY (129 aa)). His-99 acts as the Proton acceptor in catalysis. The tryptophyl-tyrosyl-methioninium (Tyr-Met) (with W-98) cross-link spans 226–252 (YVNPEGVNGKPDPLKTAAQVRTTFARM). His-267 is a binding site for heme b.

The protein belongs to the peroxidase family. Peroxidase/catalase subfamily. In terms of assembly, homodimer or homotetramer. It depends on heme b as a cofactor. Formation of the three residue Trp-Tyr-Met cross-link is important for the catalase, but not the peroxidase activity of the enzyme.

The catalysed reaction is H2O2 + AH2 = A + 2 H2O. It carries out the reaction 2 H2O2 = O2 + 2 H2O. Bifunctional enzyme with both catalase and broad-spectrum peroxidase activity. The polypeptide is Catalase-peroxidase (Maricaulis maris (strain MCS10) (Caulobacter maris)).